Reading from the N-terminus, the 1180-residue chain is Neurexin like receptor 1 (1180 aa).

An N-terminal signal peptide occupies residues 1–20 (MSGLCLVLLLSIFAVSQSSG). Residues 21-1108 (ECSDVSFSSV…SQNKQDLVSK (1088 aa)) lie on the Extracellular side of the membrane. Residues 124–290 (PITAFDDSSY…LSPNEVHNQC (167 aa)) enclose the Laminin G-like 1 domain. Asparagine 229 carries an N-linked (GlcNAc...) asparagine glycan. A disulfide bond links cysteine 267 and cysteine 290. 4 N-linked (GlcNAc...) asparagine glycosylation sites follow: asparagine 302, asparagine 336, asparagine 355, and asparagine 436. The region spanning 444 to 481 (FQEKCLPNPCENGGGCVQSALDDYVCNCKEGYKGKNCH) is the EGF-like 1 domain. Disulfide bonds link cysteine 448–cysteine 459, cysteine 453–cysteine 469, and cysteine 471–cysteine 480. Asparagine 522 and asparagine 636 each carry an N-linked (GlcNAc...) asparagine glycan. Positions 695–863 (TFDPVTFSNR…GVAIGDDGYC (169 aa)) constitute a Laminin G-like 2 domain. The EGF-like 2 domain occupies 859–896 (DDGYCRPDLCQNGGQCVDKYDGYVCDCSMTPFGGSDCT). Intrachain disulfides connect cysteine 863–cysteine 874, cysteine 868–cysteine 883, and cysteine 885–cysteine 895. 6 N-linked (GlcNAc...) asparagine glycosylation sites follow: asparagine 933, asparagine 949, asparagine 978, asparagine 997, asparagine 1011, and asparagine 1052. Residues 1109-1129 (AIIGGGILALSLFILCMSSLI) traverse the membrane as a helical segment. Residues 1130 to 1180 (CYMRSRPEGVYKTNETGENCSPSRSEEPLVHNTTSNNNNNPTYASNKEYFC) lie on the Cytoplasmic side of the membrane. Polar residues predominate over residues 1142-1152 (TNETGENCSPS). Residues 1142–1180 (TNETGENCSPSRSEEPLVHNTTSNNNNNPTYASNKEYFC) form a disordered region. Residues 1161 to 1171 (NTTSNNNNNPT) are compositionally biased toward low complexity.

Belongs to the neurexin family. Interacts (via the intracellular domain) with F-actin; the interaction is required for anchoring F-actin at the membrane for gap junction formation. Highly expressed in pharyngeal g1 and g2 gland cells, pharyngeal muscle cells and the unilateral GABAergic RIS interneuron (at protein level). Expressed in pm5 pharyngeal muscle cells and the nerve ring.

It is found in the cell membrane. Its subcellular location is the cell junction. The protein resides in the gap junction. Its function is as follows. Required for gap junction formation, playing a role in anchoring the cytoskeletal component F-actin to the membrane of adjacent cells and thus facilitating the formation of gap junction channels in embryonic cells, muscle cells and neuronal cells. Plays a role in maintaining gap junction activity to promote pharyngeal muscle contraction. The protein is Neurexin like receptor 1 of Caenorhabditis elegans.